Here is a 768-residue protein sequence, read N- to C-terminus: Cullin-3 (768 aa).

Ser-2 carries the N-acetylserine modification. Residues 2 to 41 (SNLSKGTGSRKDTKMRIRAFPMTMDEKYVNSIWDLLKNAI) are interaction with KLHL18. Ser-585 is modified (phosphoserine). The interval 677–698 (VAAKQGESDPERKETRQKVDDD) is disordered. Over residues 682–698 (GESDPERKETRQKVDDD) the composition is skewed to basic and acidic residues. The Cullin neddylation domain maps to 698–760 (DRKHEIEAAI…REYLARTPED (63 aa)). Lys-712 participates in a covalent cross-link: Glycyl lysine isopeptide (Lys-Gly) (interchain with G-Cter in NEDD8).

Belongs to the cullin family. In terms of assembly, forms neddylation-dependent homodimers. Component of multiple BCR (BTB-CUL3-RBX1) E3 ubiquitin-protein ligase complexes formed of CUL3, RBX1 and a variable BTB domain-containing protein acting as both, adapter to cullin and substrate recognition subunit. The BCR complex may be active as a heterodimeric complex, in which NEDD8, covalently attached to one CUL3 molecule, binds to the C-terminus of a second CUL3 molecule. Interacts with RBX1, RNF7, CYCE and TIP120A/CAND1. Part of the BCR(SPOP) containing SPOP, and of BCR containing homodimeric SPOPL or the heterodimer formed by SPOP and SPOPL. Part of the probable BCR(KLHL9-KLHL13) complex with BTB domain proteins KLHL9 and KLHL13. Part of the BCR(KLHL41) complex containing KLHL41. Component of the BCR(KLHL12) E3 ubiquitin ligase complex, at least composed of CUL3 and KLHL12 and RBX1. Component of the BCR(KLHL3) E3 ubiquitin ligase complex, at least composed of CUL3 and KLHL3 and RBX1. Part of the BCR(ENC1) complex containing ENC1. Part of a complex consisting of BMI1/PCGF4, CUL3 and SPOP. Part of a complex consisting of BRMS1, CUL3 and SPOP. Component of the BCR(KLHL21) E3 ubiquitin ligase complex, at least composed of CUL3, KLHL21 and RBX1. Component of the BCR(KLHL22) E3 ubiquitin ligase complex, at least composed of CUL3, KLHL22 and RBX1. Component of the BCR(KLHL25) E3 ubiquitin ligase complex, at least composed of CUL3, KLHL25 and RBX1. Part of a complex consisting of MACROH2A1, CUL3 and SPOP. Component of the BCR(KLHL42) E3 ubiquitin ligase complex, at least composed of CUL3 and KLHL42. Interacts with KLHL42 (via the BTB domain). Interacts with KATNA1; the interaction is enhanced by KLHL42. Component of the BCR(KBTBD8) E3 ubiquitin ligase complex, at least composed of CUL3, KBTBD8 and RBX1. Interacts with KCTD5, KLHL9, KLHL11, KLHL13, GAN, ZBTB16, KLHL3, KLHL15, KLHL20, KLHL36, GMCL2, BTBD1. Part of a complex that contains CUL3, RBX1 and GAN. Interacts (via BTB domain) with KLHL17; the interaction regulates surface GRIK2 expression. Interacts with KCTD7. Part of the BCR(GAN) complex containing GAN. Part of the BCR(KEAP1) complex containing KEAP1. Interacts with KLHL10. Interacts with KAT5 and ATF2. Interacts with KCTD17 in the BCR(KCTD17) E3 ubiquitin ligase complex, at least composed of CUL3, KCTD17 and RBX1. Interacts (when neddylated) with ARIH1; leading to activate the E3 ligase activity of ARIH1. Interacts with COPS9 isoform 2. Interacts with PPP2R5B; this interaction is indirect and mediated through KLHL15-binding and leads to PPP2R5B proteasomal degradation. Interacts with RBBP8/CtIP; this interaction is indirect and mediated through KLHL15-binding and leads to RBBP8 proteasomal degradation. Interacts with KLHL24 in the BCR(KLHL24) E3 ubiquitin ligase complex, composed of CUL3, RBX1 and KLHL24. Interacts with RHOBTB2. Interacts with AURKA and KLHL18 (via BTB domain). Interacts (unneddylated form) with DCUN1D1, DCUN1D2, DCUN1D3, DCUN1D4 and DCUN1D5; these interactions promote the cullin neddylation. Component of a BCR3 (BTB-CUL3-RBX1) E3 ubiquitin ligase complex, also named Cul3-RING ubiquitin ligase complex CUL3(KBTBD6/7), composed of CUL3, RBX1, KBTBD6 and KBTBD7. Component of the BCR(KBTBD2) E3 ubiquitin ligase complex, at least composed of CUL3, KBTBD2 and RBX1. Interacts with KBTBD2 (via the BTB domain). Component of the BCR(KBTBD4) E3 ubiquitin ligase complex, at least composed of CUL3, KBTBD4 and RBX1. Component of the BCR(ARMC5) E3 ubiquitin ligase complex, composed of CUL3, ARMC5 and RBX1. Neddylated. Attachment of NEDD8 is required for the E3 ubiquitin-protein ligase activity of the BCR complex. Deneddylated via its interaction with the COP9 signalosome (CSN) complex. In terms of tissue distribution, brain, spermatozoa, and testis (at protein level). Widely expressed.

It localises to the nucleus. It is found in the golgi apparatus. The protein localises to the cell projection. Its subcellular location is the cilium. The protein resides in the flagellum. It localises to the cytoplasm. It is found in the cytoskeleton. The protein localises to the spindle. Its subcellular location is the microtubule organizing center. The protein resides in the centrosome. It localises to the spindle pole. It participates in protein modification; protein ubiquitination. Functionally, core component of multiple cullin-RING-based BCR (BTB-CUL3-RBX1) E3 ubiquitin-protein ligase complexes which mediate the ubiquitination and subsequent proteasomal degradation of target proteins. BCR complexes and ARIH1 collaborate in tandem to mediate ubiquitination of target proteins. As a scaffold protein may contribute to catalysis through positioning of the substrate and the ubiquitin-conjugating enzyme. The E3 ubiquitin-protein ligase activity of the complex is dependent on the neddylation of the cullin subunit and is inhibited by the association of the deneddylated cullin subunit with TIP120A/CAND1. The functional specificity of the BCR complex depends on the BTB domain-containing protein as the substrate recognition component. BCR(KLHL42) is involved in ubiquitination of KATNA1. BCR(SPOP) is involved in ubiquitination of BMI1/PCGF4, BRMS1, MACROH2A1 and DAXX, GLI2 and GLI3. Can also form a cullin-RING-based BCR (BTB-CUL3-RBX1) E3 ubiquitin-protein ligase complex containing homodimeric SPOPL or the heterodimer formed by SPOP and SPOPL; these complexes have lower ubiquitin ligase activity. BCR(KLHL9-KLHL13) controls the dynamic behavior of AURKB on mitotic chromosomes and thereby coordinates faithful mitotic progression and completion of cytokinesis. BCR(KLHL12) is involved in ER-Golgi transport by regulating the size of COPII coats, thereby playing a key role in collagen export, which is required for embryonic stem (ES) cells division: BCR(KLHL12) acts by mediating monoubiquitination of SEC31 (SEC31A or SEC31B). BCR(KLHL3) acts as a regulator of ion transport in the distal nephron; by mediating ubiquitination of WNK4. The BCR(KLHL20) E3 ubiquitin ligase complex is involved in interferon response and anterograde Golgi to endosome transport: it mediates both ubiquitination leading to degradation and 'Lys-33'-linked ubiquitination. The BCR(KLHL21) E3 ubiquitin ligase complex regulates localization of the chromosomal passenger complex (CPC) from chromosomes to the spindle midzone in anaphase and mediates the ubiquitination of AURKB. The BCR(KLHL22) ubiquitin ligase complex mediates monoubiquitination of PLK1, leading to PLK1 dissociation from phosphoreceptor proteins and subsequent removal from kinetochores, allowing silencing of the spindle assembly checkpoint (SAC) and chromosome segregation. The BCR(KLHL22) ubiquitin ligase complex is also responsible for the amino acid-stimulated 'Lys-48' polyubiquitination and proteasomal degradation of DEPDC5. Through the degradation of DEPDC5, releases the GATOR1 complex-mediated inhibition of the TORC1 pathway. The BCR(KLHL25) ubiquitin ligase complex is involved in translational homeostasis by mediating ubiquitination and subsequent degradation of hypophosphorylated EIF4EBP1 (4E-BP1). The BCR(KLHL25) ubiquitin ligase complex is also involved in lipid synthesis by mediating ubiquitination and degradation of ACLY. The BCR(KBTBD8) complex acts by mediating monoubiquitination of NOLC1 and TCOF1, leading to remodel the translational program of differentiating cells in favor of neural crest specification. Involved in ubiquitination of cyclin E and of cyclin D1 (in vitro) thus involved in regulation of G1/S transition. Involved in the ubiquitination of KEAP1, ENC1 and KLHL41. In concert with ATF2 and RBX1, promotes degradation of KAT5 thereby attenuating its ability to acetylate and activate ATM. The BCR(KCTD17) E3 ubiquitin ligase complex mediates ubiquitination and degradation of TCHP, a down-regulator of cilium assembly, thereby inducing ciliogenesis. The BCR(KLHL24) E3 ubiquitin ligase complex mediates ubiquitination of KRT14, controls KRT14 levels during keratinocytes differentiation, and is essential for skin integrity. The BCR(KLHL18) E3 ubiquitin ligase complex mediates the ubiquitination of AURKA leading to its activation at the centrosome which is required for initiating mitotic entry. The BCR(KEAP1) E3 ubiquitin ligase complex acts as a key sensor of oxidative and electrophilic stress by mediating ubiquitination and degradation of NFE2L2/NRF2, a transcription factor regulating expression of many cytoprotective genes. As part of the CUL3(KBTBD6/7) E3 ubiquitin ligase complex functions mediates 'Lys-48' ubiquitination and proteasomal degradation of TIAM1. By controlling the ubiquitination of that RAC1 guanine exchange factors (GEF), regulates RAC1 signal transduction and downstream biological processes including the organization of the cytoskeleton, cell migration and cell proliferation. The BCR(KBTBD4) E3 ubiquitin ligase complex targets CoREST corepressor complex components RCOR1, KDM1A/LSD1 and HDAC2 for proteasomal degradation with RCOR1 likely to be the primary target while degradation of KDM1A and HDAC2 is likely due to their association with RCOR1. It also targets RCOR3, MIER2 and MIER3 for proteasomal degradation as well as associated proteins ZNF217 and RREB1 with degradation being dependent on the presence of an ELM2 domain in the target proteins. The BCR(ARMC5) complex mediates premature transcription termination of transcripts that are unfavorably configured for transcriptional elongation by mediating ubiquitination of Pol II subunit POLR2A. Required for 'Lys-63'-linked ubiquitination of large ribosomal subunit protein MRPL12. This is Cullin-3 from Homo sapiens (Human).